The following is a 431-amino-acid chain: Enolase (431 aa).

A (2R)-2-phosphoglycerate-binding site is contributed by Gln-166. Catalysis depends on Glu-208, which acts as the Proton donor. The Mg(2+) site is built by Asp-245, Glu-288, and Asp-315. Positions 340, 369, 370, and 391 each coordinate (2R)-2-phosphoglycerate. The active-site Proton acceptor is Lys-340.

The protein belongs to the enolase family. It depends on Mg(2+) as a cofactor.

The protein localises to the cytoplasm. It is found in the secreted. The protein resides in the cell surface. The enzyme catalyses (2R)-2-phosphoglycerate = phosphoenolpyruvate + H2O. Its pathway is carbohydrate degradation; glycolysis; pyruvate from D-glyceraldehyde 3-phosphate: step 4/5. Functionally, catalyzes the reversible conversion of 2-phosphoglycerate (2-PG) into phosphoenolpyruvate (PEP). It is essential for the degradation of carbohydrates via glycolysis. This Clostridium perfringens (strain ATCC 13124 / DSM 756 / JCM 1290 / NCIMB 6125 / NCTC 8237 / Type A) protein is Enolase.